A 562-amino-acid chain; its full sequence is Arginine--tRNA ligase (562 aa).

The 'HIGH' region signature appears at 121-131 (PNIAKPISMGH).

The protein belongs to the class-I aminoacyl-tRNA synthetase family. Monomer.

The protein localises to the cytoplasm. It carries out the reaction tRNA(Arg) + L-arginine + ATP = L-arginyl-tRNA(Arg) + AMP + diphosphate. The sequence is that of Arginine--tRNA ligase from Lactiplantibacillus plantarum (strain ATCC BAA-793 / NCIMB 8826 / WCFS1) (Lactobacillus plantarum).